The following is a 90-amino-acid chain: UPF0237 protein MJ1558 (90 aa).

Positions 5 to 79 (VVSVIGQDRT…EELGVQVIVQ (75 aa)) constitute an ACT domain.

It belongs to the UPF0237 family.

In Methanocaldococcus jannaschii (strain ATCC 43067 / DSM 2661 / JAL-1 / JCM 10045 / NBRC 100440) (Methanococcus jannaschii), this protein is UPF0237 protein MJ1558.